The chain runs to 502 residues: Sodium/proline symporter (502 aa).

13 helical membrane passes run 6-26 (PMLVTFCVYIFGMILIGFIAW), 42-62 (LGPFVTALSAGASDMSGWLLM), 68-88 (IFLSGISESWIAIGLTLGAWI), 127-147 (IISALVILLFFTIYCASGIVA), 163-183 (ALWAGAAATIIYTFIGGFLAV), 192-212 (SLMIFALILTPVMVIVGVGGF), 235-255 (FVAIISLMGWGLGYFGQPHIL), 276-296 (TWMILCLAGAVAVGFFGIAYF), 320-340 (ILFNPWIAGVLLSAILAAVMS), 371-391 (LVWVGRVMVLVVALIAIALAA), 398-418 (LGLVSYAWAGFGAAFGPVVLF), 430-450 (ALAGMIIGAVTVIVWKQYGWL), and 452-472 (LYEIIPGFIFGSLGIVIFSLL).

The protein belongs to the sodium:solute symporter (SSF) (TC 2.A.21) family.

The protein localises to the cell inner membrane. It carries out the reaction L-proline(in) + Na(+)(in) = L-proline(out) + Na(+)(out). In terms of biological role, catalyzes the sodium-dependent uptake of extracellular L-proline. This is Sodium/proline symporter from Salmonella typhimurium (strain LT2 / SGSC1412 / ATCC 700720).